We begin with the raw amino-acid sequence, 297 residues long: Phosphoribosylaminoimidazole-succinocarboxamide synthase (297 aa).

Belongs to the SAICAR synthetase family.

It catalyses the reaction 5-amino-1-(5-phospho-D-ribosyl)imidazole-4-carboxylate + L-aspartate + ATP = (2S)-2-[5-amino-1-(5-phospho-beta-D-ribosyl)imidazole-4-carboxamido]succinate + ADP + phosphate + 2 H(+). It functions in the pathway purine metabolism; IMP biosynthesis via de novo pathway; 5-amino-1-(5-phospho-D-ribosyl)imidazole-4-carboxamide from 5-amino-1-(5-phospho-D-ribosyl)imidazole-4-carboxylate: step 1/2. The polypeptide is Phosphoribosylaminoimidazole-succinocarboxamide synthase (Saccharopolyspora erythraea (strain ATCC 11635 / DSM 40517 / JCM 4748 / NBRC 13426 / NCIMB 8594 / NRRL 2338)).